Consider the following 277-residue polypeptide: Bis(5'-nucleosyl)-tetraphosphatase, symmetrical (277 aa).

This sequence belongs to the Ap4A hydrolase family.

The enzyme catalyses P(1),P(4)-bis(5'-adenosyl) tetraphosphate + H2O = 2 ADP + 2 H(+). In terms of biological role, hydrolyzes diadenosine 5',5'''-P1,P4-tetraphosphate to yield ADP. The polypeptide is Bis(5'-nucleosyl)-tetraphosphatase, symmetrical (Chromobacterium violaceum (strain ATCC 12472 / DSM 30191 / JCM 1249 / CCUG 213 / NBRC 12614 / NCIMB 9131 / NCTC 9757 / MK)).